Here is a 1456-residue protein sequence, read N- to C-terminus: MTPSNSLSSSERSLSGECSVDGNSCDRGIEDECSSHSSQEDVELTKEVKVDRLERKSKSMPSDILDILDEKSKENSVENVQFLSDREDDSDDVPVWEPPEPENPEDEVDGVFADDDDDCCDGSKWNKASLLGELSDESSEKRKVYEENRRVMLEEADSKFKFIVSQLIKSAGFSIEESGYWFEIVARLCWEAASMLKPAIDGKSVDPTEYIKVKCIATGSCVDSEVFKGLVFKKHAALKHMATKYEHPRIMLVEGVLGHPISGFSSLQSVNQDNEYLLKYVKPVVDIIEASKPDVMLVEKSVSRDIQKTILDKGVTLVFDMKLHRLQRISRCIGSPILSVDSLSSQKLKHCDSFRIEKIVEEHNAAGESDKKPTKTLMFLEGCPTRLGCTILLKGCHSERLKKVKEVVQYSFILAYHLMLEASFLADRHTMFSTIFAKEATSCVVEIENFSPSPSPRESPSEAVDIPVSNGFDEQTIQINGEADGEKVGTWESDGDHVFSHEPYNPVIFTGFSSLSARLSKYLGFVQNPESVPVSVDTDVSTTSNLDSIRESEEDTAEKNEDKQPLLLDPELPVNSSSDDGDNKSQTENDIESTLESQSILVLVSKRNALRGIMCDQRHFSHIKFYKHFDVPLEKFLRDMFNQRNLCQTCVEFPEAHLYYYAHQNKQLTIQIKRIPVAKGLAGEAKGKIWMWSRCGKCKTKNASRKSTKRVLISTAARSLSFGKFLELSFSQQTFLNRSSSCGHSFDSDFLHFFGLGSMVAMLSYSQVASYTVSLPPMKLESSILIKAGWLEKEFQTVFTKGISLFEDAAGFLKRLRSQFTNSDLRYQRARKLLSNIEELLKHERCIFEENIKNSFDKAKTIDDVSHRLLRLNRMRWELLLQALIWNYRLQSLVLSDRLLPSSDETKIYEQGLKTVSEAGMTRYENDNKVSDSGSNGGIDTPLVEHKDIPIAGASVGDNDQMAESYVPEDNESQTLCSSSPDTTSPINNHFDTHLAVNVHSTNGQEADKSIPVTGESLDDEVSTSNGPHILGWDEWFWLPFEELRSKRIVDIEKEYLLKFEYVNNFTQENLQTVNQIITEESSRLRISLRDDDFIVSDYEDELSSLIACALAHLNNEESKKPLSRCIHGSLQGFLDNNQDSKQTDRDVSRFSSESTNRLETLPPPEVLVTFGSVKSVGKPKYSIVSLYADDFRDLRKRCCSSELDYIASLSRCKPWDAKGGKSKSVFAKTLDDRFIVKEIKKTEYESFVTFATEYFKYMKDSYDLGNQTCLAKVLGIHQVTVRQPKGGGKEIRHDLMVMENLSFSRKVTRQYDLKGALHARFTATSANGEDDVLLDQNFVNDMNKSPLYVSKTSKQNLQRAVYNDTSFLTSINVMDYSLLVGVDDENHELVCGIIDYLRQYTWDKQLETWVKSSLVVPKNVQPTVISPIDYKTRFRKFMKTHFLCVPDQWCDQGDS.

A compositionally biased stretch (low complexity) spans 1–19; the sequence is MTPSNSLSSSERSLSGECS. Disordered stretches follow at residues 1 to 110, 533 to 592, 925 to 944, 967 to 987, 1003 to 1022, and 1137 to 1159; these read MTPS…EVDG, PVSV…NDIE, ENDNKVSDSGSNGGIDTPLV, VPEDNESQTLCSSSPDTTSPI, NGQEADKSIPVTGESLDDEV, and NNQDSKQTDRDVSRFSSESTNRL. A compositionally biased stretch (basic and acidic residues) spans 43 to 57; it reads ELTKEVKVDRLERKS. Positions 86-110 are enriched in acidic residues; that stretch reads REDDSDDVPVWEPPEPENPEDEVDG. Positions 533–544 are enriched in low complexity; it reads PVSVDTDVSTTS. Polar residues predominate over residues 973-987; that stretch reads SQTLCSSSPDTTSPI. The 329-residue stretch at 1115–1443 folds into the PIPK domain; that stretch reads NNEESKKPLS…RFRKFMKTHF (329 aa). Positions 1150–1159 are enriched in polar residues; that stretch reads RFSSESTNRL.

As to quaternary structure, component of the PI(3,5)P2 regulatory complex at least composed of ATG18, SAC/FIG4, FAB1 and VAC14. The cofactor is Mg(2+). Requires Mn(2+) as cofactor.

It catalyses the reaction a 1,2-diacyl-sn-glycero-3-phospho-(1D-myo-inositol-3-phosphate) + ATP = a 1,2-diacyl-sn-glycero-3-phospho-(1D-myo-inositol-3,5-bisphosphate) + ADP + H(+). The PI(3,5)P2 regulatory complex regulates both the synthesis and turnover of phosphatidylinositol 3,5-bisphosphate (PtdIns(3,5)P2). Catalyzes the phosphorylation of phosphatidylinositol 3-phosphate on the fifth hydroxyl of the myo-inositol ring, to form phosphatidylinositol 3,5-bisphosphate. The chain is Putative 1-phosphatidylinositol-3-phosphate 5-kinase FAB1D (FAB1D) from Arabidopsis thaliana (Mouse-ear cress).